A 353-amino-acid chain; its full sequence is Phenol 2-monooxygenase, reductase component DmpP (353 aa).

The 2Fe-2S ferredoxin-type domain maps to 3–93 (YNVTIEPTGE…DLVIEADVDA (91 aa)). [2Fe-2S] cluster contacts are provided by Cys37, Cys42, Cys45, and Cys77. Positions 102 to 201 (VEDYRGVVSA…SGPYGQFFVR (100 aa)) constitute an FAD-binding FR-type domain.

As to quaternary structure, the multicomponent enzyme phenol hydroxylase is formed by DmpL (P1 component), DmpM (P2 component), DmpN (P3 component), DmpO (P4 component) and DmpP (P5 component). FAD is required as a cofactor. [2Fe-2S] cluster serves as cofactor.

The catalysed reaction is phenol + NADH + O2 + H(+) = catechol + NAD(+) + H2O. Its pathway is aromatic compound metabolism; phenol degradation. Functionally, part of a multicomponent enzyme which catalyzes the degradation of phenol and some of its methylated derivatives. DmpP probably transfers electrons from NADH, via FAD and the iron-sulfur center, to the oxygenase component of the complex. Required for growth on phenol and for in vitro phenol hydroxylase activity. This is Phenol 2-monooxygenase, reductase component DmpP from Pseudomonas sp. (strain CF600).